The following is a 274-amino-acid chain: Large ribosomal subunit protein uL2 (274 aa).

Disordered stretches follow at residues 35–55 and 224–274; these read FGKK…RHRG and AMNP…KLKG. Over residues 45-55 the composition is skewed to basic residues; the sequence is NHGRITTRHRG. The span at 263–274 shows a compositional bias: basic and acidic residues; sequence KSSDKYIKKLKG.

Belongs to the universal ribosomal protein uL2 family. As to quaternary structure, part of the 50S ribosomal subunit. Forms a bridge to the 30S subunit in the 70S ribosome.

Its function is as follows. One of the primary rRNA binding proteins. Required for association of the 30S and 50S subunits to form the 70S ribosome, for tRNA binding and peptide bond formation. It has been suggested to have peptidyltransferase activity; this is somewhat controversial. Makes several contacts with the 16S rRNA in the 70S ribosome. This Wolbachia pipientis subsp. Culex pipiens (strain wPip) protein is Large ribosomal subunit protein uL2.